The sequence spans 311 residues: HPr kinase/phosphorylase (311 aa).

Residues histidine 138 and lysine 159 contribute to the active site. 153–160 (GDSGIGKS) provides a ligand contact to ATP. Serine 160 lines the Mg(2+) pocket. Catalysis depends on aspartate 177, which acts as the Proton acceptor; for phosphorylation activity. Proton donor; for dephosphorylation activity. The tract at residues 201 to 210 (IEIRGVGIID) is important for the catalytic mechanism of both phosphorylation and dephosphorylation. Glutamate 202 provides a ligand contact to Mg(2+). Arginine 243 is an active-site residue. The segment at 264–269 (PVKTGR) is important for the catalytic mechanism of dephosphorylation.

This sequence belongs to the HPrK/P family. In terms of assembly, homohexamer. The cofactor is Mg(2+).

The enzyme catalyses [HPr protein]-L-serine + ATP = [HPr protein]-O-phospho-L-serine + ADP + H(+). The catalysed reaction is [HPr protein]-O-phospho-L-serine + phosphate + H(+) = [HPr protein]-L-serine + diphosphate. Its function is as follows. Catalyzes the ATP- as well as the pyrophosphate-dependent phosphorylation of a specific serine residue in HPr, a phosphocarrier protein of the phosphoenolpyruvate-dependent sugar phosphotransferase system (PTS). HprK/P also catalyzes the pyrophosphate-producing, inorganic phosphate-dependent dephosphorylation (phosphorolysis) of seryl-phosphorylated HPr (P-Ser-HPr). The two antagonistic activities of HprK/P are regulated by several intracellular metabolites, which change their concentration in response to the absence or presence of rapidly metabolisable carbon sources (glucose, fructose, etc.) in the growth medium. Therefore, by controlling the phosphorylation state of HPr, HPrK/P is a sensor enzyme that plays a major role in the regulation of carbon metabolism and sugar transport: it mediates carbon catabolite repression (CCR), and regulates PTS-catalyzed carbohydrate uptake and inducer exclusion. The polypeptide is HPr kinase/phosphorylase (Streptococcus pneumoniae serotype 2 (strain D39 / NCTC 7466)).